Consider the following 81-residue polypeptide: Putative membrane protein insertion efficiency factor 1 (81 aa).

The protein belongs to the UPF0161 family.

Its subcellular location is the cell membrane. Functionally, could be involved in insertion of integral membrane proteins into the membrane. The polypeptide is Putative membrane protein insertion efficiency factor 1 (Bacillus licheniformis (strain ATCC 14580 / DSM 13 / JCM 2505 / CCUG 7422 / NBRC 12200 / NCIMB 9375 / NCTC 10341 / NRRL NRS-1264 / Gibson 46)).